The sequence spans 561 residues: Cytochrome P450 monooxygenase avaL (561 aa).

Residues 19-39 (IAASCALVCIVSACYVVWSLL) form a helical membrane-spanning segment. Position 508 (Cys-508) interacts with heme.

It belongs to the cytochrome P450 family. Heme serves as cofactor.

It localises to the membrane. The protein operates within secondary metabolite biosynthesis. Its function is as follows. Cytochrome P450 monooxygenase; part of the cluster that mediates the biosynthesis of a highly modified cyclo-arginine-tryptophan dipeptide (cRW). The first step of the pathway is perfornmed by the arginine-containing cyclodipeptide synthase (RCPDS) avaA that acts as the scaffold-generating enzyme and is responsible for formation of the cyclo-Arg-Trp (cRW) diketopiperazine. AvaB then acts as a multifunctional flavoenzyme that is responsible for generating the cyclo-Arg-formylkynurenine DKP, which can be deformylated by avaC. AvaB then further catalyzes an additional N-oxidation followed by cyclization and dehydration. The next step is an N-acetylation of the guanidine group catalyzed by the arginine N-acetyltransferase avaD. The roles of the additional enzymes identified within the ava cluster still have to be determined. The sequence is that of Cytochrome P450 monooxygenase avaL from Aspergillus versicolor.